Here is a 103-residue protein sequence, read N- to C-terminus: UPF0145 protein PERMA_0324 (103 aa).

This sequence belongs to the UPF0145 family.

This Persephonella marina (strain DSM 14350 / EX-H1) protein is UPF0145 protein PERMA_0324.